We begin with the raw amino-acid sequence, 368 residues long: Phosphoribosylformylglycinamidine cyclo-ligase (368 aa).

It belongs to the AIR synthase family.

It localises to the cytoplasm. The catalysed reaction is 2-formamido-N(1)-(5-O-phospho-beta-D-ribosyl)acetamidine + ATP = 5-amino-1-(5-phospho-beta-D-ribosyl)imidazole + ADP + phosphate + H(+). The protein operates within purine metabolism; IMP biosynthesis via de novo pathway; 5-amino-1-(5-phospho-D-ribosyl)imidazole from N(2)-formyl-N(1)-(5-phospho-D-ribosyl)glycinamide: step 2/2. The sequence is that of Phosphoribosylformylglycinamidine cyclo-ligase from Novosphingobium aromaticivorans (strain ATCC 700278 / DSM 12444 / CCUG 56034 / CIP 105152 / NBRC 16084 / F199).